A 228-amino-acid chain; its full sequence is Protein GrpE (228 aa).

Disordered stretches follow at residues 1–31 (MADEKNKSQNPDLEQRDINNPRDREALNRAA) and 209–228 (GVSKGGPKATADNGASEGNG).

This sequence belongs to the GrpE family. As to quaternary structure, homodimer.

It is found in the cytoplasm. Functionally, participates actively in the response to hyperosmotic and heat shock by preventing the aggregation of stress-denatured proteins, in association with DnaK and GrpE. It is the nucleotide exchange factor for DnaK and may function as a thermosensor. Unfolded proteins bind initially to DnaJ; upon interaction with the DnaJ-bound protein, DnaK hydrolyzes its bound ATP, resulting in the formation of a stable complex. GrpE releases ADP from DnaK; ATP binding to DnaK triggers the release of the substrate protein, thus completing the reaction cycle. Several rounds of ATP-dependent interactions between DnaJ, DnaK and GrpE are required for fully efficient folding. The sequence is that of Protein GrpE from Brucella anthropi (strain ATCC 49188 / DSM 6882 / CCUG 24695 / JCM 21032 / LMG 3331 / NBRC 15819 / NCTC 12168 / Alc 37) (Ochrobactrum anthropi).